The sequence spans 92 residues: DNA/RNA-binding protein Alba (92 aa).

Lys11 is modified (N6-acetyllysine).

This sequence belongs to the histone-like Alba family. In terms of processing, acetylated. Acetylation at Lys-11 decreases DNA-binding affinity.

The protein localises to the cytoplasm. It localises to the chromosome. Binds double-stranded DNA tightly but without sequence specificity. Involved in DNA compaction. This is DNA/RNA-binding protein Alba from Pyrobaculum islandicum (strain DSM 4184 / JCM 9189 / GEO3).